The primary structure comprises 36 residues: F420-dependent NADP reductase (36 aa).

Residue 9–12 (TGNI) participates in NADP(+) binding.

This sequence belongs to the F420-dependent NADP reductase family. Homotetramer.

It catalyses the reaction reduced coenzyme F420-(gamma-L-Glu)(n) + NADP(+) = oxidized coenzyme F420-(gamma-L-Glu)(n) + NADPH + 2 H(+). Its function is as follows. Catalyzes the reduction of NADP(+) with F420H(2) via hydride transfer, and the reverse reaction, i.e. the reduction of F420 with NADPH. In M.organophilum, an alcohol-fermenting methanogen containing an NADP-dependent alcohol dehydrogenase, is probably involved in the regeneration of F420H(2) required for CO(2) reduction to methane. Thus, during growth on alcohol and CO(2), the F420-dependent NADP reductase probably has the function of coupling the NADP-dependent oxidation of the alcohol to the aldehyde with the F420-dependent reduction of CO(2) to methane. The protein is F420-dependent NADP reductase (fno) of Methanogenium organophilum.